Reading from the N-terminus, the 27-residue chain is Small integral membrane protein 43 (27 aa).

The segment at 15–21 (HREPWGF) is important for interaction with SLC2A1 and SLC2A3.

Interacts with glucose transporters SLC2A1/GLUT1 and SLC2A3/GLUT3; the interactions may promote SLC2A1- and SLC2A3-mediated glucose transport to meet the energy needs of mesendoderm differentiation.

It is found in the cell membrane. In terms of biological role, required for mesendoderm differentiation. Interacts with glucose transporters and promotes glucose uptake. Probably augments the glucose uptake capacity of glucose transporter proteins to meet the energy needs of mesendoderm differentiation. This is Small integral membrane protein 43 from Pongo abelii (Sumatran orangutan).